A 219-amino-acid polypeptide reads, in one-letter code: Chloramphenicol acetyltransferase (219 aa).

His-193 functions as the Proton acceptor in the catalytic mechanism.

It belongs to the chloramphenicol acetyltransferase family. As to quaternary structure, homotrimer.

It carries out the reaction chloramphenicol + acetyl-CoA = chloramphenicol 3-acetate + CoA. Its function is as follows. This enzyme is an effector of chloramphenicol resistance in bacteria. The polypeptide is Chloramphenicol acetyltransferase (cat) (Klebsiella sp).